The sequence spans 336 residues: MIEADRLIQPQVQGQDELIDRAMRPKMLDEYTGQDDTRAQLKVFIQAAINRREALDHMLIFGPPGLGKTTLAMIVANEMGVNIKSTSGPVLEKAGDLAALLTNLEEGDVLFIDEIHRLSPVVEEILYPAMEDYQLDIMIGDGPAARSIKLDLPPFTLIGATTRAGALTSPLRARFGIPLRLEFYNVADLTTIVTRSANVMNLEIDEQGAIEIAKRSRGTPRIANRLLRRVRDYAEVKHDGKVSQTVAEYALDLLDVDDQGFDYLDRKLLLAIIDKFMGGPVGLDNLAAAIGEDRETIEDVLEPFLIQQGFIQRTPRGRIASQRAYDHFSLVRPEKA.

The interval alanine 4–tyrosine 184 is large ATPase domain (RuvB-L). Residues arginine 24, glycine 65, lysine 68, threonine 69, threonine 70, glutamate 131–tyrosine 133, arginine 174, tyrosine 184, and arginine 221 contribute to the ATP site. Residue threonine 69 coordinates Mg(2+). Positions asparagine 185 to aspartate 255 are small ATPAse domain (RuvB-S). Residues aspartate 258–alanine 336 are head domain (RuvB-H). Residues arginine 294, arginine 313, and arginine 318 each contribute to the DNA site.

This sequence belongs to the RuvB family. In terms of assembly, homohexamer. Forms an RuvA(8)-RuvB(12)-Holliday junction (HJ) complex. HJ DNA is sandwiched between 2 RuvA tetramers; dsDNA enters through RuvA and exits via RuvB. An RuvB hexamer assembles on each DNA strand where it exits the tetramer. Each RuvB hexamer is contacted by two RuvA subunits (via domain III) on 2 adjacent RuvB subunits; this complex drives branch migration. In the full resolvosome a probable DNA-RuvA(4)-RuvB(12)-RuvC(2) complex forms which resolves the HJ.

It localises to the cytoplasm. It catalyses the reaction ATP + H2O = ADP + phosphate + H(+). In terms of biological role, the RuvA-RuvB-RuvC complex processes Holliday junction (HJ) DNA during genetic recombination and DNA repair, while the RuvA-RuvB complex plays an important role in the rescue of blocked DNA replication forks via replication fork reversal (RFR). RuvA specifically binds to HJ cruciform DNA, conferring on it an open structure. The RuvB hexamer acts as an ATP-dependent pump, pulling dsDNA into and through the RuvAB complex. RuvB forms 2 homohexamers on either side of HJ DNA bound by 1 or 2 RuvA tetramers; 4 subunits per hexamer contact DNA at a time. Coordinated motions by a converter formed by DNA-disengaged RuvB subunits stimulates ATP hydrolysis and nucleotide exchange. Immobilization of the converter enables RuvB to convert the ATP-contained energy into a lever motion, pulling 2 nucleotides of DNA out of the RuvA tetramer per ATP hydrolyzed, thus driving DNA branch migration. The RuvB motors rotate together with the DNA substrate, which together with the progressing nucleotide cycle form the mechanistic basis for DNA recombination by continuous HJ branch migration. Branch migration allows RuvC to scan DNA until it finds its consensus sequence, where it cleaves and resolves cruciform DNA. This Shewanella frigidimarina (strain NCIMB 400) protein is Holliday junction branch migration complex subunit RuvB.